The sequence spans 119 residues: MSAPINKEKVEQEAEQQIHKIRITLTSTKVKQLENVSANIIRNAAQYNIVKKGPVRMPTKVLKITTRKTPNGEGSKTWDAYEMRIHKRVIDLQAPASTVKRITQITIEPGVDVEVTIAA.

The protein belongs to the universal ribosomal protein uS10 family. As to quaternary structure, component of the small ribosomal subunit. Mature ribosomes consist of a small (40S) and a large (60S) subunit. The 40S subunit contains about 32 different proteins and 1 molecule of RNA (18S). The 60S subunit contains 45 different proteins and 3 molecules of RNA (25S, 5.8S and 5S).

It localises to the cytoplasm. Component of the ribosome, a large ribonucleoprotein complex responsible for the synthesis of proteins in the cell. The small ribosomal subunit (SSU) binds messenger RNAs (mRNAs) and translates the encoded message by selecting cognate aminoacyl-transfer RNA (tRNA) molecules. The large subunit (LSU) contains the ribosomal catalytic site termed the peptidyl transferase center (PTC), which catalyzes the formation of peptide bonds, thereby polymerizing the amino acids delivered by tRNAs into a polypeptide chain. The nascent polypeptides leave the ribosome through a tunnel in the LSU and interact with protein factors that function in enzymatic processing, targeting, and the membrane insertion of nascent chains at the exit of the ribosomal tunnel. This Candida albicans (strain SC5314 / ATCC MYA-2876) (Yeast) protein is Small ribosomal subunit protein uS10 (RPS20).